The primary structure comprises 204 residues: Guanylate kinase (204 aa).

Residues 5–184 (GLLLVLSGPS…AVDHIKAIVD (180 aa)) form the Guanylate kinase-like domain. 12 to 19 (GPSGVGKG) is an ATP binding site.

Belongs to the guanylate kinase family.

Its subcellular location is the cytoplasm. The catalysed reaction is GMP + ATP = GDP + ADP. Its function is as follows. Essential for recycling GMP and indirectly, cGMP. In Lactobacillus acidophilus (strain ATCC 700396 / NCK56 / N2 / NCFM), this protein is Guanylate kinase.